The sequence spans 137 residues: Small ribosomal subunit protein uS12 (137 aa).

A disordered region spans residues 1-26 (MPTINQLVTKGRKRKASKTKSPALNQ).

It belongs to the universal ribosomal protein uS12 family. Part of the 30S ribosomal subunit. Contacts proteins S8 and S17. May interact with IF1 in the 30S initiation complex.

Its function is as follows. With S4 and S5 plays an important role in translational accuracy. Functionally, interacts with and stabilizes bases of the 16S rRNA that are involved in tRNA selection in the A site and with the mRNA backbone. Located at the interface of the 30S and 50S subunits, it traverses the body of the 30S subunit contacting proteins on the other side and probably holding the rRNA structure together. The combined cluster of proteins S8, S12 and S17 appears to hold together the shoulder and platform of the 30S subunit. The protein is Small ribosomal subunit protein uS12 of Mycoplasmopsis pulmonis (strain UAB CTIP) (Mycoplasma pulmonis).